The following is a 502-amino-acid chain: Probable cytosol aminopeptidase (502 aa).

Positions 267 and 272 each coordinate Mn(2+). Lys279 is an active-site residue. Mn(2+)-binding residues include Asp290, Asp349, and Glu351. Arg353 is a catalytic residue.

This sequence belongs to the peptidase M17 family. Mn(2+) is required as a cofactor.

Its subcellular location is the cytoplasm. It catalyses the reaction Release of an N-terminal amino acid, Xaa-|-Yaa-, in which Xaa is preferably Leu, but may be other amino acids including Pro although not Arg or Lys, and Yaa may be Pro. Amino acid amides and methyl esters are also readily hydrolyzed, but rates on arylamides are exceedingly low.. The catalysed reaction is Release of an N-terminal amino acid, preferentially leucine, but not glutamic or aspartic acids.. Presumably involved in the processing and regular turnover of intracellular proteins. Catalyzes the removal of unsubstituted N-terminal amino acids from various peptides. This chain is Probable cytosol aminopeptidase, found in Aeromonas hydrophila subsp. hydrophila (strain ATCC 7966 / DSM 30187 / BCRC 13018 / CCUG 14551 / JCM 1027 / KCTC 2358 / NCIMB 9240 / NCTC 8049).